A 1159-amino-acid polypeptide reads, in one-letter code: RAD51-associated protein 2 (1159 aa).

The disordered stretch occupies residues Met-1 to Arg-35. Residues Ser-1111–Phe-1159 are interaction with RAD51.

Interacts with RAD51. In terms of tissue distribution, specifically expressed in meiotic tissues. Highly expressed in testis.

This chain is RAD51-associated protein 2 (RAD51AP2), found in Homo sapiens (Human).